Reading from the N-terminus, the 356-residue chain is S-adenosylmethionine:tRNA ribosyltransferase-isomerase (356 aa).

Belongs to the QueA family. Monomer.

The protein localises to the cytoplasm. It carries out the reaction 7-aminomethyl-7-carbaguanosine(34) in tRNA + S-adenosyl-L-methionine = epoxyqueuosine(34) in tRNA + adenine + L-methionine + 2 H(+). The protein operates within tRNA modification; tRNA-queuosine biosynthesis. Functionally, transfers and isomerizes the ribose moiety from AdoMet to the 7-aminomethyl group of 7-deazaguanine (preQ1-tRNA) to give epoxyqueuosine (oQ-tRNA). The protein is S-adenosylmethionine:tRNA ribosyltransferase-isomerase of Escherichia coli O8 (strain IAI1).